The primary structure comprises 477 residues: Bifunctional protein HldE (477 aa).

The segment at 1 to 319 is ribokinase; it reads MKITLPPFDQ…RALQEQEQSG (319 aa). 195–198 lines the ATP pocket; sequence NLAE. D264 is an active-site residue. A cytidylyltransferase region spans residues 344–477; that stretch reads MTNGCFDLLH…IERMQSAPDT (134 aa).

It in the N-terminal section; belongs to the carbohydrate kinase PfkB family. This sequence in the C-terminal section; belongs to the cytidylyltransferase family. Homodimer.

The catalysed reaction is D-glycero-beta-D-manno-heptose 7-phosphate + ATP = D-glycero-beta-D-manno-heptose 1,7-bisphosphate + ADP + H(+). The enzyme catalyses D-glycero-beta-D-manno-heptose 1-phosphate + ATP + H(+) = ADP-D-glycero-beta-D-manno-heptose + diphosphate. Its pathway is nucleotide-sugar biosynthesis; ADP-L-glycero-beta-D-manno-heptose biosynthesis; ADP-L-glycero-beta-D-manno-heptose from D-glycero-beta-D-manno-heptose 7-phosphate: step 1/4. The protein operates within nucleotide-sugar biosynthesis; ADP-L-glycero-beta-D-manno-heptose biosynthesis; ADP-L-glycero-beta-D-manno-heptose from D-glycero-beta-D-manno-heptose 7-phosphate: step 3/4. Its function is as follows. Catalyzes the phosphorylation of D-glycero-D-manno-heptose 7-phosphate at the C-1 position to selectively form D-glycero-beta-D-manno-heptose-1,7-bisphosphate. Functionally, catalyzes the ADP transfer from ATP to D-glycero-beta-D-manno-heptose 1-phosphate, yielding ADP-D-glycero-beta-D-manno-heptose. In Alkalilimnicola ehrlichii (strain ATCC BAA-1101 / DSM 17681 / MLHE-1), this protein is Bifunctional protein HldE.